Reading from the N-terminus, the 62-residue chain is Alpha-conotoxin Vt1.27 (62 aa).

The signal sequence occupies residues 1 to 21 (MGMRMMFTVFLLVVLATTVVS). Residues 22-40 (FTLDRASDGASAAADLVAR) constitute a propeptide that is removed on maturation. Disulfide bonds link C46/C52 and C47/C61.

This sequence belongs to the conotoxin A superfamily. Expressed by the venom duct.

It localises to the secreted. The short (45-61) amidated synthetic peptide inhibits the rat neuronal alpha-3-beta-2/CHRNA3-CHRNB2 nicotinic acetylcholine receptor (nAChR) (IC(50)=1.16 uM). It also inhibits Cav2.2/CACNA1C voltage-gated calcium channel (IC(50)=398 nM). In vivo, when tested in rat pain models, this short amidated peptide increases the pain threshold. The chain is Alpha-conotoxin Vt1.27 from Conus planorbis (Planorbis cone).